A 262-amino-acid chain; its full sequence is MAVTAQAARRKERVLCLFDVDGTLTPARQKIDPEVAAFLQKLRSRVQIGVVGGSDYCKIAEQLGDGDEVIEKFDYVFAENGTVQYKHGRLLSKQTIQNHLGEELLQDLINFCLSYMALLRLPKKRGTFIEFRNGMLNISPIGRSCTLEERIEFSELDKKEKIREKFVEALKTEFAGKGLRFSRGGMISFDVFPEGWDKRYCLDSLDQDSFDTIHFFGNETSPGGNDFEIFADPRTVGHSVVSPQDTVQRCREIFFPETAHEA.

At A2 the chain carries N-acetylalanine. The active-site Nucleophile is the D19. D19 and D21 together coordinate Mg(2+). D21 (proton donor/acceptor) is an active-site residue. 7 residues coordinate alpha-D-mannose 1-phosphate: R28, R132, R143, R150, M186, S188, and D190. Residues N218, F230, D232, and T235 each contribute to the Mg(2+) site. At S242 the chain carries Phosphoserine.

It belongs to the eukaryotic PMM family. Homodimer. Requires Mg(2+) as cofactor. In terms of tissue distribution, strong expression in liver, heart, brain, and pancreas; lower expression in skeletal muscle.

Its subcellular location is the cytoplasm. The enzyme catalyses alpha-D-mannose 1-phosphate = D-mannose 6-phosphate. It functions in the pathway nucleotide-sugar biosynthesis; GDP-alpha-D-mannose biosynthesis; alpha-D-mannose 1-phosphate from D-fructose 6-phosphate: step 2/2. IMP, a metabolite whose concentration is elevated in anoxia, inhibits phosphomannomutase and phosphoglucomutase activities and strongly enhances glucose-1,6-bisphosphatase activity. Its function is as follows. Involved in the synthesis of the GDP-mannose and dolichol-phosphate-mannose required for a number of critical mannosyl transfer reactions. In addition, may be responsible for the degradation of glucose-1,6-bisphosphate in ischemic brain. This chain is Phosphomannomutase 1 (PMM1), found in Homo sapiens (Human).